We begin with the raw amino-acid sequence, 52 residues long: Defensin D2 (52 aa).

Intrachain disulfides connect cysteine 8–cysteine 52, cysteine 19–cysteine 39, cysteine 25–cysteine 46, and cysteine 29–cysteine 48.

As to expression, distributed in the epidermal cell layer of leaves and in the subepidermal layer region of stems. Not in roots.

It localises to the secreted. It is found in the cell wall. In terms of biological role, antimicrobial peptide. Active against Fusarium spp., Gram-positive and Gram-negative bacterial pathogens. The protein is Defensin D2 of Spinacia oleracea (Spinach).